The sequence spans 44 residues: Cytochrome b559 subunit beta (44 aa).

A helical transmembrane segment spans residues 19 to 35 (WLSVHALGVPSVFFLGA). His23 lines the heme pocket.

This sequence belongs to the PsbE/PsbF family. As to quaternary structure, heterodimer of an alpha subunit and a beta subunit. PSII is composed of 1 copy each of membrane proteins PsbA, PsbB, PsbC, PsbD, PsbE, PsbF, PsbH, PsbI, PsbJ, PsbK, PsbL, PsbM, PsbT, PsbX, PsbY, PsbZ, Psb30/Ycf12, peripheral proteins PsbO, CyanoQ (PsbQ), PsbU, PsbV and a large number of cofactors. It forms dimeric complexes. The cofactor is heme b.

The protein resides in the cellular thylakoid membrane. In terms of biological role, this b-type cytochrome is tightly associated with the reaction center of photosystem II (PSII). PSII is a light-driven water:plastoquinone oxidoreductase that uses light energy to abstract electrons from H(2)O, generating O(2) and a proton gradient subsequently used for ATP formation. It consists of a core antenna complex that captures photons, and an electron transfer chain that converts photonic excitation into a charge separation. The sequence is that of Cytochrome b559 subunit beta from Synechococcus elongatus (strain ATCC 33912 / PCC 7942 / FACHB-805) (Anacystis nidulans R2).